We begin with the raw amino-acid sequence, 683 residues long: Methionine--tRNA ligase (683 aa).

Positions Pro-23 to His-33 match the 'HIGH' region motif. Zn(2+) contacts are provided by Cys-154, Cys-157, Cys-166, and Cys-170. The 'KMSKS' region signature appears at Lys-335 to Ser-339. Lys-338 is a binding site for ATP. The region spanning Asp-583–Arg-683 is the tRNA-binding domain.

The protein belongs to the class-I aminoacyl-tRNA synthetase family. MetG type 1 subfamily. As to quaternary structure, homodimer. Zn(2+) is required as a cofactor.

It is found in the cytoplasm. The catalysed reaction is tRNA(Met) + L-methionine + ATP = L-methionyl-tRNA(Met) + AMP + diphosphate. In terms of biological role, is required not only for elongation of protein synthesis but also for the initiation of all mRNA translation through initiator tRNA(fMet) aminoacylation. This chain is Methionine--tRNA ligase, found in Methanocella arvoryzae (strain DSM 22066 / NBRC 105507 / MRE50).